Here is a 337-residue protein sequence, read N- to C-terminus: MTHQVSVLHQDKKFDISLRPKGLREFCGQKQLTERLELFLHAAVQRGEVPGHCLFFGPPGLGKTSLAHIVAHTVGKGLVVASGPQLVKPSDLLGLLTSLQEGDVFFIDEIHRMGKVAEEYLYSAMEDYKIDITIDSGPGARSVSVDLAPFSLVGATTRSGMLSEPLRARFSFTGRMSYYSDEDLTTILKRSSNLLGIDADTAALYEIARRSRGTPRLANNLLRWVRDFAQMREGNCINSDVAEKALAMLLIDDWGLNEIDIKLLTTIIDYYQGGPVGIKTLSVAVGEDIKTLEDVYEPFLILKGLLKKTSRGRMVTQIAYNHLKRCSDNLQSLGEEK.

The segment at 1 to 179 (MTHQVSVLHQ…FSFTGRMSYY (179 aa)) is large ATPase domain (RuvB-L). ATP is bound by residues Leu-18, Arg-19, Gly-60, Lys-63, Thr-64, Ser-65, 126 to 128 (EDY), Arg-169, Tyr-179, and Arg-216. Residue Thr-64 coordinates Mg(2+). Positions 180–250 (SDEDLTTILK…VAEKALAMLL (71 aa)) are small ATPAse domain (RuvB-S). Positions 253–337 (DWGLNEIDIK…DNLQSLGEEK (85 aa)) are head domain (RuvB-H). DNA-binding residues include Lys-308 and Arg-313.

Belongs to the RuvB family. Homohexamer. Forms an RuvA(8)-RuvB(12)-Holliday junction (HJ) complex. HJ DNA is sandwiched between 2 RuvA tetramers; dsDNA enters through RuvA and exits via RuvB. An RuvB hexamer assembles on each DNA strand where it exits the tetramer. Each RuvB hexamer is contacted by two RuvA subunits (via domain III) on 2 adjacent RuvB subunits; this complex drives branch migration. In the full resolvosome a probable DNA-RuvA(4)-RuvB(12)-RuvC(2) complex forms which resolves the HJ.

The protein localises to the cytoplasm. The enzyme catalyses ATP + H2O = ADP + phosphate + H(+). Its function is as follows. The RuvA-RuvB-RuvC complex processes Holliday junction (HJ) DNA during genetic recombination and DNA repair, while the RuvA-RuvB complex plays an important role in the rescue of blocked DNA replication forks via replication fork reversal (RFR). RuvA specifically binds to HJ cruciform DNA, conferring on it an open structure. The RuvB hexamer acts as an ATP-dependent pump, pulling dsDNA into and through the RuvAB complex. RuvB forms 2 homohexamers on either side of HJ DNA bound by 1 or 2 RuvA tetramers; 4 subunits per hexamer contact DNA at a time. Coordinated motions by a converter formed by DNA-disengaged RuvB subunits stimulates ATP hydrolysis and nucleotide exchange. Immobilization of the converter enables RuvB to convert the ATP-contained energy into a lever motion, pulling 2 nucleotides of DNA out of the RuvA tetramer per ATP hydrolyzed, thus driving DNA branch migration. The RuvB motors rotate together with the DNA substrate, which together with the progressing nucleotide cycle form the mechanistic basis for DNA recombination by continuous HJ branch migration. Branch migration allows RuvC to scan DNA until it finds its consensus sequence, where it cleaves and resolves cruciform DNA. The sequence is that of Holliday junction branch migration complex subunit RuvB from Chlamydia caviae (strain ATCC VR-813 / DSM 19441 / 03DC25 / GPIC) (Chlamydophila caviae).